Here is a 157-residue protein sequence, read N- to C-terminus: Ribosome maturation factor RimP (157 aa).

It belongs to the RimP family.

The protein resides in the cytoplasm. In terms of biological role, required for maturation of 30S ribosomal subunits. The protein is Ribosome maturation factor RimP of Geobacillus kaustophilus (strain HTA426).